A 278-amino-acid polypeptide reads, in one-letter code: Tyrosine-protein phosphatase pmp1 (278 aa).

The 155-residue stretch at 60 to 214 (GPVCIYPPNI…LSEYQQIIRK (155 aa)) folds into the Tyrosine-protein phosphatase domain. C158 acts as the Phosphocysteine intermediate in catalysis. The interval 217–278 (SQGPYQSSSL…SSGSISNDAS (62 aa)) is disordered. Positions 252-278 (SPSTSESSMFTNLRRTRSSGSISNDAS) are enriched in polar residues.

It belongs to the protein-tyrosine phosphatase family. Non-receptor class dual specificity subfamily.

It catalyses the reaction O-phospho-L-tyrosyl-[protein] + H2O = L-tyrosyl-[protein] + phosphate. Functionally, dual specificity phosphatase that dephosphorylates MAP kinase pmk1 on a Tyr. Has a role in chloride ion homeostasis by inactivating this pmk1 MAP kinase pathway. The chain is Tyrosine-protein phosphatase pmp1 (pmp1) from Schizosaccharomyces pombe (strain 972 / ATCC 24843) (Fission yeast).